We begin with the raw amino-acid sequence, 209 residues long: MAIERYFIKEGVKEMLIDEFLEKELRRAGYGGLDIKKTPLGTKVTIFAANPGYVIGRGGRRIRELTRILEKQFGLENPQIEVEEIKNPYLNAKVQAVRLAQALERGIHFRRAAYSAIRAIMRNGARGVEIRLSGKLTGERAKSVRFYQGYLAKVGNPAETLVSRGYAQAQLKLGVIGVKVSIMPPDAKLPDEIEIKEIVEEEVSANEAQ.

Residues Ile-17 to Lys-86 enclose the KH type-2 domain.

Belongs to the universal ribosomal protein uS3 family. In terms of assembly, part of the 30S ribosomal subunit.

Binds the lower part of the 30S subunit head. This chain is Small ribosomal subunit protein uS3, found in Thermococcus kodakarensis (strain ATCC BAA-918 / JCM 12380 / KOD1) (Pyrococcus kodakaraensis (strain KOD1)).